We begin with the raw amino-acid sequence, 954 residues long: Protein translocase subunit SecA (954 aa).

ATP-binding positions include Gln86, 104–108 (GEGKT), and Asp494. A disordered region spans residues 520-549 (LDPDNPLGSASTTSRGGGQGFGPASPKPKK).

This sequence belongs to the SecA family. As to quaternary structure, monomer and homodimer. Part of the essential Sec protein translocation apparatus which comprises SecA, SecYEG and auxiliary proteins SecDF. Other proteins may also be involved.

It localises to the cell inner membrane. It is found in the cellular thylakoid membrane. The protein localises to the cytoplasm. It carries out the reaction ATP + H2O + cellular proteinSide 1 = ADP + phosphate + cellular proteinSide 2.. Part of the Sec protein translocase complex. Interacts with the SecYEG preprotein conducting channel. Has a central role in coupling the hydrolysis of ATP to the transfer of proteins into and across the cell membrane, serving as an ATP-driven molecular motor driving the stepwise translocation of polypeptide chains across the membrane. In terms of biological role, probably participates in protein translocation into and across both the cytoplasmic and thylakoid membranes in cyanobacterial cells. In Synechococcus sp. (strain JA-3-3Ab) (Cyanobacteria bacterium Yellowstone A-Prime), this protein is Protein translocase subunit SecA.